The chain runs to 390 residues: Methylthioribose-1-phosphate isomerase (390 aa).

Substrate-binding positions include arginine 53–alanine 55, arginine 90, and glutamine 207. The active-site Proton donor is the aspartate 248. Residue asparagine 258–lysine 259 coordinates substrate.

It belongs to the EIF-2B alpha/beta/delta subunits family. MtnA subfamily.

The catalysed reaction is 5-(methylsulfanyl)-alpha-D-ribose 1-phosphate = 5-(methylsulfanyl)-D-ribulose 1-phosphate. It catalyses the reaction 5-deoxy-alpha-D-ribose 1-phosphate = 5-deoxy-D-ribulose 1-phosphate. It participates in amino-acid biosynthesis; L-methionine biosynthesis via salvage pathway; L-methionine from S-methyl-5-thio-alpha-D-ribose 1-phosphate: step 1/6. Functionally, catalyzes the interconversion of methylthioribose-1-phosphate (MTR-1-P) into methylthioribulose-1-phosphate (MTRu-1-P). Also catalyzes the interconversion of 5-deoxyribose 1-phosphate and 5-deoxyribulose 1-phosphate. Part of a bifunctional DHAP-shunt salvage pathway for SAM by-products. The protein is Methylthioribose-1-phosphate isomerase of Rhodospirillum rubrum (strain ATCC 11170 / ATH 1.1.1 / DSM 467 / LMG 4362 / NCIMB 8255 / S1).